The sequence spans 168 residues: MRTQSLKPYHANYHSLTTNDSPARVDAPTDSGLISEFVYSENQPVVTQLLLPLLQQLSKQSRWLLWLTPQQKLSRSWLKQSGLPINKVVQLRQINPLSTVEAMEKALLTGNYSVVLGWLPELTEDDRIRLRLAAKLGNAYGFVMRPLNDTKVGSGQCATLKIHSYLYH.

Positions 106–112 are ftsZ binding; the sequence is ALLTGNY. The tract at residues 161-168 is lon protease binding; that stretch reads KIHSYLYH.

Belongs to the SulA family. In terms of assembly, interacts with FtsZ. In terms of processing, is rapidly cleaved and degraded by the Lon protease once DNA damage is repaired.

Component of the SOS system and an inhibitor of cell division. Accumulation of SulA causes rapid cessation of cell division and the appearance of long, non-septate filaments. In the presence of GTP, binds a polymerization-competent form of FtsZ in a 1:1 ratio, thus inhibiting FtsZ polymerization and therefore preventing it from participating in the assembly of the Z ring. This mechanism prevents the premature segregation of damaged DNA to daughter cells during cell division. The chain is Cell division inhibitor SulA from Yersinia pseudotuberculosis serotype O:1b (strain IP 31758).